Here is a 300-residue protein sequence, read N- to C-terminus: RNA polymerase sigma factor RpoH (300 aa).

Residues 53–122 (LVTSHLRLVA…IQEYILRSWS (70 aa)) form a sigma-70 factor domain-2 region. The Interaction with polymerase core subunit RpoC signature appears at 77–80 (EVVS). Positions 231-282 (AMGVLNDRERRIFEARRLAEDPVTLEELSSEFDISRERVRQIEVRAFEKVQE) are sigma-70 factor domain-4. Positions 255 to 274 (LEELSSEFDISRERVRQIEV) form a DNA-binding region, H-T-H motif.

The protein belongs to the sigma-70 factor family. RpoH subfamily. As to quaternary structure, interacts with the RNA polymerase core enzyme.

It is found in the cytoplasm. Its function is as follows. Sigma factors are initiation factors that promote the attachment of RNA polymerase to specific initiation sites and are then released. This sigma factor is involved in regulation of expression of heat shock genes. This chain is RNA polymerase sigma factor RpoH, found in Rhizobium radiobacter (Agrobacterium tumefaciens).